Consider the following 500-residue polypeptide: Glycerol kinase (500 aa).

ADP is bound at residue T12. ATP-binding residues include T12, T13, and S14. Sn-glycerol 3-phosphate is bound at residue T12. ADP is bound at residue R16. Residues R82, E83, Y135, and D245 each contribute to the sn-glycerol 3-phosphate site. Positions 82, 83, 135, 245, and 246 each coordinate glycerol. ADP contacts are provided by T267 and G310. Residues T267, G310, Q314, and G411 each contribute to the ATP site. ADP is bound by residues G411 and N415.

The protein belongs to the FGGY kinase family. In terms of assembly, homotetramer and homodimer (in equilibrium).

The catalysed reaction is glycerol + ATP = sn-glycerol 3-phosphate + ADP + H(+). It participates in polyol metabolism; glycerol degradation via glycerol kinase pathway; sn-glycerol 3-phosphate from glycerol: step 1/1. With respect to regulation, activated by phosphorylation and inhibited by fructose 1,6-bisphosphate (FBP). Its function is as follows. Key enzyme in the regulation of glycerol uptake and metabolism. Catalyzes the phosphorylation of glycerol to yield sn-glycerol 3-phosphate. The chain is Glycerol kinase from Clostridium perfringens (strain ATCC 13124 / DSM 756 / JCM 1290 / NCIMB 6125 / NCTC 8237 / Type A).